A 1250-amino-acid polypeptide reads, in one-letter code: Phospholipid-transporting ATPase IC (1250 aa).

Composition is skewed to acidic residues over residues 1-13 (MDTDYESTYEDDS) and 24-40 (SDDETDDELDSPQTDEP). The segment at 1-52 (MDTDYESTYEDDSQVPNDDVVPYSDDETDDELDSPQTDEPEQNRRNVQAEQS) is disordered. Residues 1–133 (MDTDYESTYE…VLLILQTIPQ (133 aa)) are Cytoplasmic-facing. A helical membrane pass occupies residues 134-154 (ISTVTWSTTLIPLLLVLGITA). Over 155 to 338 (IKDLVDDIAR…TKIDYLMNYM (184 aa)) the chain is Exoplasmic loop. A helical membrane pass occupies residues 339–359 (VYTIFVLLILAAAGLAIGQTF). Residues 360–385 (WEAKLGAANVSWYLYDGNNYSPSYRG) are Cytoplasmic-facing. Residues 386 to 406 (FLAFWGYIIVLNTMVPISLYV) form a helical membrane-spanning segment. The Exoplasmic loop segment spans residues 407 to 956 (SVEVIRLGQS…KFLRYFFYKN (550 aa)). Asp-454 serves as the catalytic 4-aspartylphosphate intermediate. Residues Asp-454, Lys-455, Thr-456, Glu-553, Phe-594, Lys-617, Arg-650, Thr-730, Gly-731, Asp-732, Arg-865, and Lys-871 each coordinate ATP. A Mg(2+)-binding site is contributed by Asp-454. A Mg(2+)-binding site is contributed by Thr-456. Residue Asp-891 participates in Mg(2+) binding. Residues Asn-894 and Asp-895 each coordinate ATP. Asp-895 serves as a coordination point for Mg(2+). Residues 957–977 (FSFTLVHFWYSFFNGFSAQTV) form a helical membrane-spanning segment. At 978-980 (YED) the chain is on the cytoplasmic side. The chain crosses the membrane as a helical span at residues 981–1001 (WFITLYNVLYSSLPVLLVGLL). The Exoplasmic loop portion of the chain corresponds to 1002-1034 (DQDVSDKLSLAFPRLYVPGQKDLLFNYKKFFLS). A helical membrane pass occupies residues 1035–1055 (LFHGIVTSLIIFFIPYGAFLL). The Cytoplasmic portion of the chain corresponds to 1056 to 1069 (TMGQDGEAPSDYQS). A helical transmembrane segment spans residues 1070-1090 (FAVTTATALVITVNFQIGLDT). Residues 1091-1092 (SY) lie on the Exoplasmic loop side of the membrane. Residues 1093-1113 (WTFVNAFSIFGSIAIYFGIMF) traverse the membrane as a helical segment. The Cytoplasmic segment spans residues 1114-1117 (DLHS). Residues 1118–1138 (AGIHVLFPSMFIFTGAAPNAL) traverse the membrane as a helical segment. Residues 1139 to 1140 (RQ) lie on the Exoplasmic loop side of the membrane. Residues 1141–1161 (PYLWLTIILTVAFCLLPIVAL) form a helical membrane-spanning segment. The Cytoplasmic segment spans residues 1162–1250 (RFLAKTIWPS…AQITHFTPQT (89 aa)).

Belongs to the cation transport ATPase (P-type) (TC 3.A.3) family. Type IV subfamily. Component of a P4-ATPase flippase complex which consists of a catalytic alpha subunit and an accessory beta subunit. The flippase ATP8B1:TMEM30A complex can form an intermediate phosphoenzyme in vitro. Also interacts with beta subunit TMEM30B. The cofactor is Mg(2+).

Its subcellular location is the cell membrane. The protein resides in the apical cell membrane. It is found in the cell projection. It localises to the stereocilium. The protein localises to the endoplasmic reticulum. Its subcellular location is the golgi apparatus. The enzyme catalyses ATP + H2O + phospholipidSide 1 = ADP + phosphate + phospholipidSide 2.. The catalysed reaction is a 1,2-diacyl-sn-glycero-3-phospho-L-serine(out) + ATP + H2O = a 1,2-diacyl-sn-glycero-3-phospho-L-serine(in) + ADP + phosphate + H(+). In terms of biological role, catalytic component of a P4-ATPase flippase complex which catalyzes the hydrolysis of ATP coupled to the transport of aminophospholipids from the outer to the inner leaflet of various membranes and ensures the maintenance of asymmetric distribution of phospholipids. Phospholipid translocation also seems to be implicated in vesicle formation and in uptake of lipid signaling molecules. May also participate in the establishment of the canalicular membrane integrity by ensuring asymmetric distribution of phospholipids in the canicular membrane. The polypeptide is Phospholipid-transporting ATPase IC (atp8b1) (Xenopus tropicalis (Western clawed frog)).